A 197-amino-acid polypeptide reads, in one-letter code: Lipid A acyltransferase PagP (197 aa).

The first 24 residues, 1–24, serve as a signal peptide directing secretion; that stretch reads MMFFKRTILACTVALLFPALPSYA. Residues histidine 69, aspartate 112, and serine 113 contribute to the active site.

This sequence belongs to the lipid A palmitoyltransferase family. As to quaternary structure, homodimer.

It localises to the cell outer membrane. The enzyme catalyses a lipid A + a 1,2-diacyl-sn-glycero-3-phosphocholine = a hepta-acyl lipid A + a 2-acyl-sn-glycero-3-phosphocholine. It carries out the reaction a lipid IVA + a 1,2-diacyl-sn-glycero-3-phosphocholine = a lipid IVB + a 2-acyl-sn-glycero-3-phosphocholine. It catalyses the reaction a lipid IIA + a 1,2-diacyl-sn-glycero-3-phosphocholine = a lipid IIB + a 2-acyl-sn-glycero-3-phosphocholine. Its function is as follows. Transfers a fatty acid residue from the sn-1 position of a phospholipid to the N-linked hydroxyfatty acid chain on the proximal unit of lipid A or its precursors. In Serratia proteamaculans (strain 568), this protein is Lipid A acyltransferase PagP.